The sequence spans 196 residues: Imidazoleglycerol-phosphate dehydratase (196 aa).

This sequence belongs to the imidazoleglycerol-phosphate dehydratase family.

It localises to the cytoplasm. It catalyses the reaction D-erythro-1-(imidazol-4-yl)glycerol 3-phosphate = 3-(imidazol-4-yl)-2-oxopropyl phosphate + H2O. It functions in the pathway amino-acid biosynthesis; L-histidine biosynthesis; L-histidine from 5-phospho-alpha-D-ribose 1-diphosphate: step 6/9. This is Imidazoleglycerol-phosphate dehydratase from Clostridium botulinum (strain Okra / Type B1).